We begin with the raw amino-acid sequence, 169 residues long: MRKGKLPRKLGRTASHRRATLANLSSQLIIYKRVTTTEAKAKEMKRIVDKLITRAKKGTVHAQREVFKFVRDKEAVKTLFEDVVSKSAERNGGYTRVIKLPPRYGDAAKMALIELVDYSEMTTEKAVKRQDRSRRVKGSKKAIDEKTSDDSASVEAAPAAPEAEEKKDA.

The segment at 124–169 (EKAVKRQDRSRRVKGSKKAIDEKTSDDSASVEAAPAAPEAEEKKDA) is disordered. Basic residues predominate over residues 131–140 (DRSRRVKGSK). Residues 150–161 (DSASVEAAPAAP) are compositionally biased toward low complexity.

The protein belongs to the bacterial ribosomal protein bL17 family. As to quaternary structure, part of the 50S ribosomal subunit. Contacts protein L32.

In Chloroherpeton thalassium (strain ATCC 35110 / GB-78), this protein is Large ribosomal subunit protein bL17.